A 78-amino-acid chain; its full sequence is Large ribosomal subunit protein uL29 (78 aa).

This sequence belongs to the universal ribosomal protein uL29 family.

The sequence is that of Large ribosomal subunit protein uL29 from Crocosphaera subtropica (strain ATCC 51142 / BH68) (Cyanothece sp. (strain ATCC 51142)).